A 104-amino-acid polypeptide reads, in one-letter code: Large ribosomal subunit protein uL24 (104 aa).

Belongs to the universal ribosomal protein uL24 family. In terms of assembly, part of the 50S ribosomal subunit.

One of two assembly initiator proteins, it binds directly to the 5'-end of the 23S rRNA, where it nucleates assembly of the 50S subunit. In terms of biological role, one of the proteins that surrounds the polypeptide exit tunnel on the outside of the subunit. This is Large ribosomal subunit protein uL24 from Maricaulis maris (strain MCS10) (Caulobacter maris).